The sequence spans 411 residues: Glutamyl-tRNA reductase (411 aa).

Residues 49–52, Ser-99, 104–106, and Gln-110 contribute to the substrate site; these read TCNR and ENE. Cys-50 serves as the catalytic Nucleophile. An NADP(+)-binding site is contributed by 179-184; the sequence is GAGEAG.

This sequence belongs to the glutamyl-tRNA reductase family. Homodimer.

The enzyme catalyses (S)-4-amino-5-oxopentanoate + tRNA(Glu) + NADP(+) = L-glutamyl-tRNA(Glu) + NADPH + H(+). Its pathway is porphyrin-containing compound metabolism; protoporphyrin-IX biosynthesis; 5-aminolevulinate from L-glutamyl-tRNA(Glu): step 1/2. Functionally, catalyzes the NADPH-dependent reduction of glutamyl-tRNA(Glu) to glutamate 1-semialdehyde (GSA). The chain is Glutamyl-tRNA reductase from Hyperthermus butylicus (strain DSM 5456 / JCM 9403 / PLM1-5).